A 206-amino-acid polypeptide reads, in one-letter code: Urease accessory protein UreG (206 aa).

14-21 contributes to the GTP binding site; it reads GPVGSGKT.

The protein belongs to the SIMIBI class G3E GTPase family. UreG subfamily. As to quaternary structure, homodimer. UreD, UreF and UreG form a complex that acts as a GTP-hydrolysis-dependent molecular chaperone, activating the urease apoprotein by helping to assemble the nickel containing metallocenter of UreC. The UreE protein probably delivers the nickel.

Its subcellular location is the cytoplasm. In terms of biological role, facilitates the functional incorporation of the urease nickel metallocenter. This process requires GTP hydrolysis, probably effectuated by UreG. In Aliivibrio fischeri (strain ATCC 700601 / ES114) (Vibrio fischeri), this protein is Urease accessory protein UreG.